The following is a 337-amino-acid chain: D-alanine--D-alanine ligase (337 aa).

The 207-residue stretch at K124–N330 folds into the ATP-grasp domain. Position 154–209 (A154–E209) interacts with ATP. 3 residues coordinate Mg(2+): D284, E297, and N299.

It belongs to the D-alanine--D-alanine ligase family. Mg(2+) serves as cofactor. The cofactor is Mn(2+).

The protein localises to the cytoplasm. It carries out the reaction 2 D-alanine + ATP = D-alanyl-D-alanine + ADP + phosphate + H(+). It participates in cell wall biogenesis; peptidoglycan biosynthesis. Functionally, cell wall formation. This chain is D-alanine--D-alanine ligase, found in Shewanella baltica (strain OS195).